The following is a 338-amino-acid chain: Glycerol-3-phosphate dehydrogenase [NAD(P)+] (338 aa).

Positions 11, 12, 32, 33, and 109 each coordinate NADPH. 3 residues coordinate sn-glycerol 3-phosphate: K109, G140, and S142. Position 144 (A144) interacts with NADPH. Residues K195, D248, S258, R259, and N260 each coordinate sn-glycerol 3-phosphate. The active-site Proton acceptor is the K195. Position 259 (R259) interacts with NADPH. Residues V283 and E285 each contribute to the NADPH site.

Belongs to the NAD-dependent glycerol-3-phosphate dehydrogenase family.

The protein resides in the cytoplasm. It carries out the reaction sn-glycerol 3-phosphate + NAD(+) = dihydroxyacetone phosphate + NADH + H(+). It catalyses the reaction sn-glycerol 3-phosphate + NADP(+) = dihydroxyacetone phosphate + NADPH + H(+). It participates in membrane lipid metabolism; glycerophospholipid metabolism. In terms of biological role, catalyzes the reduction of the glycolytic intermediate dihydroxyacetone phosphate (DHAP) to sn-glycerol 3-phosphate (G3P), the key precursor for phospholipid synthesis. This is Glycerol-3-phosphate dehydrogenase [NAD(P)+] from Leuconostoc citreum (strain KM20).